A 115-amino-acid polypeptide reads, in one-letter code: NAD(P)H-quinone oxidoreductase subunit M (115 aa).

It belongs to the complex I NdhM subunit family. As to quaternary structure, NDH-1 can be composed of about 15 different subunits; different subcomplexes with different compositions have been identified which probably have different functions.

The protein resides in the cellular thylakoid membrane. The catalysed reaction is a plastoquinone + NADH + (n+1) H(+)(in) = a plastoquinol + NAD(+) + n H(+)(out). The enzyme catalyses a plastoquinone + NADPH + (n+1) H(+)(in) = a plastoquinol + NADP(+) + n H(+)(out). Its function is as follows. NDH-1 shuttles electrons from an unknown electron donor, via FMN and iron-sulfur (Fe-S) centers, to quinones in the respiratory and/or the photosynthetic chain. The immediate electron acceptor for the enzyme in this species is believed to be plastoquinone. Couples the redox reaction to proton translocation, and thus conserves the redox energy in a proton gradient. Cyanobacterial NDH-1 also plays a role in inorganic carbon-concentration. This is NAD(P)H-quinone oxidoreductase subunit M from Prochlorococcus marinus (strain SARG / CCMP1375 / SS120).